Consider the following 737-residue polypeptide: Polyribonucleotide nucleotidyltransferase (737 aa).

Residues Asp489 and Asp495 each contribute to the Mg(2+) site. Positions 556-615 (PKIDTIKIDVDKIKIVIGKGGETIDKIIAETGVKIDIDEEGNVSIYSSDQDAINRAKEII) constitute a KH domain. In terms of domain architecture, S1 motif spans 625–693 (DEVYRAKVVR…EKGRIDASMK (69 aa)). Residues 691–737 (SMKALLPRPPKPEHDEKGEKSERPHRPRHHKDHKPKKEFTETPKDSE) form a disordered region. Residues 700-714 (PKPEHDEKGEKSERP) are compositionally biased toward basic and acidic residues. Positions 715–724 (HRPRHHKDHK) are enriched in basic residues. Over residues 725–737 (PKKEFTETPKDSE) the composition is skewed to basic and acidic residues.

The protein belongs to the polyribonucleotide nucleotidyltransferase family. Requires Mg(2+) as cofactor.

The protein resides in the cytoplasm. The enzyme catalyses RNA(n+1) + phosphate = RNA(n) + a ribonucleoside 5'-diphosphate. In terms of biological role, involved in mRNA degradation. Catalyzes the phosphorolysis of single-stranded polyribonucleotides processively in the 3'- to 5'-direction. This is Polyribonucleotide nucleotidyltransferase from Streptococcus pneumoniae (strain Taiwan19F-14).